Here is a 123-residue protein sequence, read N- to C-terminus: Maintenance of telomere capping protein 3, mitochondrial (123 aa).

The N-terminal 37 residues, 1–37 (MMGRNGIRLALKRSFSTYQPPVVEITNITKLWPTLRP), are a transit peptide targeting the mitochondrion.

Its subcellular location is the mitochondrion. Functionally, may be involved in telomere capping. This is Maintenance of telomere capping protein 3, mitochondrial (MTC3) from Saccharomyces cerevisiae (strain ATCC 204508 / S288c) (Baker's yeast).